Reading from the N-terminus, the 326-residue chain is Serpentine receptor class alpha-12 (326 aa).

Topologically, residues methionine 1 to glutamine 17 are extracellular. A helical membrane pass occupies residues isoleucine 18–alanine 38. Residues isoleucine 39–valine 54 lie on the Cytoplasmic side of the membrane. A helical membrane pass occupies residues leucine 55 to phenylalanine 75. Topologically, residues lysine 76–threonine 101 are extracellular. The helical transmembrane segment at threonine 102–phenylalanine 122 threads the bilayer. Over arginine 123–alanine 138 the chain is Cytoplasmic. The helical transmembrane segment at leucine 139–isoleucine 159 threads the bilayer. Residues arginine 160–threonine 185 are Extracellular-facing. Residues tyrosine 186–leucine 206 form a helical membrane-spanning segment. Over arginine 207–threonine 234 the chain is Cytoplasmic. A helical membrane pass occupies residues isoleucine 235 to phenylalanine 255. Over methionine 256 to asparagine 270 the chain is Extracellular. A helical transmembrane segment spans residues valine 271–phenylalanine 291. Residues serine 292–glycine 326 lie on the Cytoplasmic side of the membrane.

The protein belongs to the nematode receptor-like protein sra family.

The protein localises to the membrane. This Caenorhabditis briggsae protein is Serpentine receptor class alpha-12.